Here is a 350-residue protein sequence, read N- to C-terminus: Heme A synthase (350 aa).

8 helical membrane passes run 16–36 (LARW…VGGI), 77–97 (FQLV…IFFW), 101–121 (HRLL…WFWI), 136–156 (LLAL…SGIV), 170–190 (LLVA…LVAL), 201–221 (GIGL…ALVA), 265–285 (VFLV…VLVV), and 299–321 (IVLH…SGVA). His-272 serves as a coordination point for heme. His-328 contacts heme.

It belongs to the COX15/CtaA family. Type 2 subfamily. As to quaternary structure, interacts with CtaB. It depends on heme b as a cofactor.

The protein localises to the cell membrane. It carries out the reaction Fe(II)-heme o + 2 A + H2O = Fe(II)-heme a + 2 AH2. Its pathway is porphyrin-containing compound metabolism; heme A biosynthesis; heme A from heme O: step 1/1. Its function is as follows. Catalyzes the conversion of heme O to heme A by two successive hydroxylations of the methyl group at C8. The first hydroxylation forms heme I, the second hydroxylation results in an unstable dihydroxymethyl group, which spontaneously dehydrates, resulting in the formyl group of heme A. In Novosphingobium aromaticivorans (strain ATCC 700278 / DSM 12444 / CCUG 56034 / CIP 105152 / NBRC 16084 / F199), this protein is Heme A synthase.